Consider the following 993-residue polypeptide: Nisin biosynthesis protein NisB (993 aa).

The chain crosses the membrane as a helical span at residues 838–851 (AIFCADSKIIPNLL).

It to B.subtilis SpaB and S.epidermidis EpiB.

It localises to the cell membrane. Functionally, involved in the post-translational modification of the lantibiotic nisin. This Lactococcus lactis subsp. lactis (Streptococcus lactis) protein is Nisin biosynthesis protein NisB (nisB).